We begin with the raw amino-acid sequence, 252 residues long: MSDWNPSLYLHFAAERSRPAVELLARVSLENIEYIADLGCGTGNSTALLHQRWPAARITGIDSSPAMIAEARSALPDSLFVEADIRNWQPEQALDLIFANASLQWLPDHYELFPHLVSLLSPLGVLAVQMPDNWLEPTHVLMREVAWEQNYPDRGREPLAGVHAYYDILSEAGCEVDIWRTTYYHQMPSHQAIIDWVTATGLRPWLQDLTESEQQHFLTRYHQMLEEQYPLQENGQILLAFPRLFIVARRTE.

Belongs to the methyltransferase superfamily. Tam family.

It localises to the cytoplasm. The enzyme catalyses trans-aconitate + S-adenosyl-L-methionine = (E)-3-(methoxycarbonyl)pent-2-enedioate + S-adenosyl-L-homocysteine. Catalyzes the S-adenosylmethionine monomethyl esterification of trans-aconitate. The polypeptide is Trans-aconitate 2-methyltransferase (Escherichia coli O1:K1 / APEC).